Here is a 146-residue protein sequence, read N- to C-terminus: MYPAHLLVLLAVCVSLLGAASIPPQPLNLVQFSYLIQCANHGSRATWHYTDYGCYCGSGGSGTPVDELDRCCQTHDNCYGEAEKKGCYPKMLAYDYYCGGDGPYCRNIKKECQRFVCDCDVEAAKCFARAPYNDANWNIDTKKRCQ.

The signal sequence occupies residues 1–19; sequence MYPAHLLVLLAVCVSLLGA. The propeptide occupies 20–27; the sequence is ASIPPQPL. 7 disulfide bridges follow: cysteine 38-cysteine 98, cysteine 54-cysteine 145, cysteine 56-cysteine 72, cysteine 71-cysteine 126, cysteine 78-cysteine 119, cysteine 87-cysteine 112, and cysteine 105-cysteine 117. The Ca(2+) site is built by tyrosine 55, glycine 57, and glycine 59. Residue histidine 75 is part of the active site. Aspartate 76 is a binding site for Ca(2+). Aspartate 120 is an active-site residue.

It belongs to the phospholipase A2 family. Group I subfamily. D49 sub-subfamily. The cofactor is Ca(2+). As to expression, expressed by the venom gland.

Its subcellular location is the secreted. The catalysed reaction is a 1,2-diacyl-sn-glycero-3-phosphocholine + H2O = a 1-acyl-sn-glycero-3-phosphocholine + a fatty acid + H(+). Functionally, snake venom phospholipase A2 (PLA2) that inhibits collagen-induced platelet aggregation. PLA2 catalyzes the calcium-dependent hydrolysis of the 2-acyl groups in 3-sn-phosphoglycerides. The sequence is that of Acidic phospholipase A2 S14-72F from Austrelaps superbus (Lowland copperhead snake).